The primary structure comprises 561 residues: Potassium-transporting ATPase potassium-binding subunit (561 aa).

The next 11 membrane-spanning stretches (helical) occupy residues 5–25, 63–83, 103–122, 133–153, 179–199, 255–275, 281–301, 380–400, 418–438, 485–505, and 531–551; these read IELFTMIAIIVLLTKPLGTYM, KYALTFLLVNMVMMIITYFIL, LAFNTVISFMTNTNLQHYAG, IVIVFLMFTSAASGLVTAAAI, LLPISMLATLILVWQGVPQTF, IEMLLMMLLPTSLIYTYGLMI, ALVLYISLFVIFILLAVGAVY, AGLQNIIMYTILTVFLTGLMV, LIALAILVHPFLILFSSALTV, IMTGLVMFFGRYITIILMLAV, and AIFIAVVLIVGALTFFPAVIL.

Belongs to the KdpA family. As to quaternary structure, the system is composed of three essential subunits: KdpA, KdpB and KdpC.

It is found in the cell membrane. Its function is as follows. Part of the high-affinity ATP-driven potassium transport (or Kdp) system, which catalyzes the hydrolysis of ATP coupled with the electrogenic transport of potassium into the cytoplasm. This subunit binds the extracellular potassium ions and delivers the ions to the membrane domain of KdpB through an intramembrane tunnel. The chain is Potassium-transporting ATPase potassium-binding subunit from Caldanaerobacter subterraneus subsp. tengcongensis (strain DSM 15242 / JCM 11007 / NBRC 100824 / MB4) (Thermoanaerobacter tengcongensis).